The following is a 307-amino-acid chain: Probable aspartoacylase (307 aa).

Zn(2+)-binding residues include His-13 and Glu-16. Residues Arg-55 and 62-63 contribute to the substrate site; that span reads NR. His-105 is a binding site for Zn(2+). Glu-163 and Tyr-276 together coordinate substrate.

The protein belongs to the AspA/AstE family. Aspartoacylase subfamily. Zn(2+) is required as a cofactor.

It catalyses the reaction an N-acyl-L-aspartate + H2O = a carboxylate + L-aspartate. The protein is Probable aspartoacylase of Prochlorococcus marinus (strain SARG / CCMP1375 / SS120).